The following is a 313-amino-acid chain: Ornithine carbamoyltransferase (313 aa).

Carbamoyl phosphate contacts are provided by residues 57–60 (STRT), Gln84, Arg108, and 135–138 (HPTQ). L-ornithine-binding positions include Asn167, Asp231, and 235-236 (SM). Carbamoyl phosphate-binding positions include 272-273 (CL) and Arg300.

The protein belongs to the aspartate/ornithine carbamoyltransferase superfamily. OTCase family.

The protein localises to the cytoplasm. It catalyses the reaction carbamoyl phosphate + L-ornithine = L-citrulline + phosphate + H(+). Its pathway is amino-acid biosynthesis; L-arginine biosynthesis; L-arginine from L-ornithine and carbamoyl phosphate: step 1/3. In terms of biological role, reversibly catalyzes the transfer of the carbamoyl group from carbamoyl phosphate (CP) to the N(epsilon) atom of ornithine (ORN) to produce L-citrulline. The protein is Ornithine carbamoyltransferase of Pseudothermotoga lettingae (strain ATCC BAA-301 / DSM 14385 / NBRC 107922 / TMO) (Thermotoga lettingae).